The chain runs to 230 residues: Cytidylate kinase (230 aa).

Residue 12–20 (GPSGAGKGT) participates in ATP binding.

The protein belongs to the cytidylate kinase family. Type 1 subfamily.

The protein localises to the cytoplasm. It catalyses the reaction CMP + ATP = CDP + ADP. The catalysed reaction is dCMP + ATP = dCDP + ADP. This is Cytidylate kinase from Shewanella sediminis (strain HAW-EB3).